Reading from the N-terminus, the 404-residue chain is Cysteine desulfurase IscS (404 aa).

Pyridoxal 5'-phosphate-binding positions include 75–76 (AT), Asn155, Gln183, and 203–205 (SAH). Lys206 carries the post-translational modification N6-(pyridoxal phosphate)lysine. Position 243 (Thr243) interacts with pyridoxal 5'-phosphate. Cys328 functions as the Cysteine persulfide intermediate in the catalytic mechanism. Cys328 lines the [2Fe-2S] cluster pocket.

Belongs to the class-V pyridoxal-phosphate-dependent aminotransferase family. NifS/IscS subfamily. As to quaternary structure, homodimer. Forms a heterotetramer with IscU, interacts with other sulfur acceptors. Requires pyridoxal 5'-phosphate as cofactor.

Its subcellular location is the cytoplasm. It catalyses the reaction (sulfur carrier)-H + L-cysteine = (sulfur carrier)-SH + L-alanine. It participates in cofactor biosynthesis; iron-sulfur cluster biosynthesis. Functionally, master enzyme that delivers sulfur to a number of partners involved in Fe-S cluster assembly, tRNA modification or cofactor biosynthesis. Catalyzes the removal of elemental sulfur atoms from cysteine to produce alanine. Functions as a sulfur delivery protein for Fe-S cluster synthesis onto IscU, an Fe-S scaffold assembly protein, as well as other S acceptor proteins. The sequence is that of Cysteine desulfurase IscS from Pseudomonas syringae pv. tomato (strain ATCC BAA-871 / DC3000).